The sequence spans 561 residues: Arginine--tRNA ligase (561 aa).

The 'HIGH' region signature appears at 108–118 (PNVAKEMHVGH).

It belongs to the class-I aminoacyl-tRNA synthetase family. In terms of assembly, monomer.

It localises to the cytoplasm. It catalyses the reaction tRNA(Arg) + L-arginine + ATP = L-arginyl-tRNA(Arg) + AMP + diphosphate. The chain is Arginine--tRNA ligase from Haemophilus ducreyi (strain 35000HP / ATCC 700724).